The sequence spans 143 residues: Large-conductance mechanosensitive channel (143 aa).

A run of 2 helical transmembrane segments spans residues 10–30 (FAVK…GAFS) and 89–109 (GSFI…FLMV).

The protein belongs to the MscL family. Homopentamer.

It localises to the cell inner membrane. In terms of biological role, channel that opens in response to stretch forces in the membrane lipid bilayer. May participate in the regulation of osmotic pressure changes within the cell. The polypeptide is Large-conductance mechanosensitive channel (Burkholderia ambifaria (strain ATCC BAA-244 / DSM 16087 / CCUG 44356 / LMG 19182 / AMMD) (Burkholderia cepacia (strain AMMD))).